The chain runs to 160 residues: Transcriptional repressor NrdR (160 aa).

Residues 1–11 show a composition bias toward polar residues; that stretch reads MRCPNCNSLDT. Residues 1 to 20 form a disordered region; sequence MRCPNCNSLDTQVKDSRPTE. A zinc finger lies at 3–34; the sequence is CPNCNSLDTQVKDSRPTEDSSVIRRRRVCIAC. Residues 49–139 form the ATP-cone domain; sequence LTVIKRNGRR…VYRNFREAKD (91 aa).

Belongs to the NrdR family. Zn(2+) is required as a cofactor.

Functionally, negatively regulates transcription of bacterial ribonucleotide reductase nrd genes and operons by binding to NrdR-boxes. The sequence is that of Transcriptional repressor NrdR from Rhodopseudomonas palustris (strain BisB5).